Consider the following 333-residue polypeptide: Holliday junction branch migration complex subunit RuvB (333 aa).

Positions 1–182 (MDERLLSGES…FGVLSRLEYY (182 aa)) are large ATPase domain (RuvB-L). Residues leucine 21, arginine 22, glycine 63, lysine 66, threonine 67, threonine 68, 129 to 131 (EDF), arginine 172, tyrosine 182, and arginine 219 each bind ATP. Residue threonine 67 coordinates Mg(2+). Residues 183–253 (TVDQLSEIVE…ITQMALELLQ (71 aa)) are small ATPAse domain (RuvB-S). A head domain (RuvB-H) region spans residues 256–333 (KLGLDHIDHK…EHFGMEMPKV (78 aa)). Residues arginine 311 and arginine 316 each coordinate DNA.

It belongs to the RuvB family. In terms of assembly, homohexamer. Forms an RuvA(8)-RuvB(12)-Holliday junction (HJ) complex. HJ DNA is sandwiched between 2 RuvA tetramers; dsDNA enters through RuvA and exits via RuvB. An RuvB hexamer assembles on each DNA strand where it exits the tetramer. Each RuvB hexamer is contacted by two RuvA subunits (via domain III) on 2 adjacent RuvB subunits; this complex drives branch migration. In the full resolvosome a probable DNA-RuvA(4)-RuvB(12)-RuvC(2) complex forms which resolves the HJ.

The protein localises to the cytoplasm. It catalyses the reaction ATP + H2O = ADP + phosphate + H(+). Its function is as follows. The RuvA-RuvB-RuvC complex processes Holliday junction (HJ) DNA during genetic recombination and DNA repair, while the RuvA-RuvB complex plays an important role in the rescue of blocked DNA replication forks via replication fork reversal (RFR). RuvA specifically binds to HJ cruciform DNA, conferring on it an open structure. The RuvB hexamer acts as an ATP-dependent pump, pulling dsDNA into and through the RuvAB complex. RuvB forms 2 homohexamers on either side of HJ DNA bound by 1 or 2 RuvA tetramers; 4 subunits per hexamer contact DNA at a time. Coordinated motions by a converter formed by DNA-disengaged RuvB subunits stimulates ATP hydrolysis and nucleotide exchange. Immobilization of the converter enables RuvB to convert the ATP-contained energy into a lever motion, pulling 2 nucleotides of DNA out of the RuvA tetramer per ATP hydrolyzed, thus driving DNA branch migration. The RuvB motors rotate together with the DNA substrate, which together with the progressing nucleotide cycle form the mechanistic basis for DNA recombination by continuous HJ branch migration. Branch migration allows RuvC to scan DNA until it finds its consensus sequence, where it cleaves and resolves cruciform DNA. This chain is Holliday junction branch migration complex subunit RuvB, found in Bacillus cereus (strain ATCC 10987 / NRS 248).